The chain runs to 489 residues: MKPIKALSVASEIFPLIKTGGLADVTGALPGALKPHGITLRTLVPGYPTVIAGIEAALPVHVFPALFGGPARLLAARKGDVELFVLDAPHLYKRPGNPYASPDGRDWPDNAQRFAALARAAAEIGQGLVPAFVPDIVHAHDWQAGLTAAYLRYSDKPAPATVFTVHNLAFQGQFPRELLGTLGLPPSSFGVDGVEYYGAIGYMKAGLQLSDRITTVSPAYALEIQAPEAGMGLDGLLRQRSHHLTGILNGIDEKVWNPATDKRIAATYDVKTLPARGANKAALRERFGLASETDRLLIGVISRLSWQKGLDLLLETLPLLLSEGIQLALLGAGDAALEAAFRQVAQSHPGQIGVVVGYDEDLAHLIQAGADALLVPSRFEPCGLTQLCALRYGAVPVVARVGGLSDTVVDANEMAIAAGVATGVQFSPVTRDMLAAALIKTHGLYSDRTTWQALQQNGMRSDVSWRNPAQHYAQLYRNLLAARSPHLAM.

Lysine 18 provides a ligand contact to ADP-alpha-D-glucose.

The protein belongs to the glycosyltransferase 1 family. Bacterial/plant glycogen synthase subfamily.

It carries out the reaction [(1-&gt;4)-alpha-D-glucosyl](n) + ADP-alpha-D-glucose = [(1-&gt;4)-alpha-D-glucosyl](n+1) + ADP + H(+). Its pathway is glycan biosynthesis; glycogen biosynthesis. In terms of biological role, synthesizes alpha-1,4-glucan chains using ADP-glucose. The chain is Glycogen synthase from Rhodopseudomonas palustris (strain BisA53).